The following is a 426-amino-acid chain: Dihydroorotase (426 aa).

H61 and H63 together coordinate Zn(2+). Substrate is bound by residues 63-65 (HCR) and N95. E146, H180, H229, and D297 together coordinate Zn(2+). The active site involves D297. Residue H301 coordinates substrate.

It belongs to the metallo-dependent hydrolases superfamily. DHOase family. Class I DHOase subfamily. It depends on Zn(2+) as a cofactor.

It carries out the reaction (S)-dihydroorotate + H2O = N-carbamoyl-L-aspartate + H(+). The protein operates within pyrimidine metabolism; UMP biosynthesis via de novo pathway; (S)-dihydroorotate from bicarbonate: step 3/3. Catalyzes the reversible cyclization of carbamoyl aspartate to dihydroorotate. The polypeptide is Dihydroorotase (Methanopyrus kandleri (strain AV19 / DSM 6324 / JCM 9639 / NBRC 100938)).